A 396-amino-acid polypeptide reads, in one-letter code: Elongation factor Tu (396 aa).

The region spanning 10 to 206 (KPHCNIGTIG…AVDSYIPQPE (197 aa)) is the tr-type G domain. The segment at 19-26 (GHVDHGKT) is G1. Residue 19–26 (GHVDHGKT) coordinates GTP. A Mg(2+)-binding site is contributed by T26. Residues 60 to 64 (GITIS) form a G2 region. The G3 stretch occupies residues 81-84 (DCPG). GTP-binding positions include 81–85 (DCPGH) and 136–139 (NKVD). The tract at residues 136 to 139 (NKVD) is G4. Positions 174–176 (SAV) are G5.

It belongs to the TRAFAC class translation factor GTPase superfamily. Classic translation factor GTPase family. EF-Tu/EF-1A subfamily. Monomer.

The protein resides in the cytoplasm. It carries out the reaction GTP + H2O = GDP + phosphate + H(+). GTP hydrolase that promotes the GTP-dependent binding of aminoacyl-tRNA to the A-site of ribosomes during protein biosynthesis. The chain is Elongation factor Tu from Rhizorhabdus wittichii (strain DSM 6014 / CCUG 31198 / JCM 15750 / NBRC 105917 / EY 4224 / RW1) (Sphingomonas wittichii).